Consider the following 387-residue polypeptide: Ferrochelatase (387 aa).

The tract at residues 1 to 318 (MGRVGVLLLN…VFIDALAQMV (318 aa)) is ferrochelatase. The Fe cation site is built by His196 and Glu277. Residues 319 to 387 (MDSLNDPPCT…QGPLHFVGLL (69 aa)) form a hlip domain region.

This sequence in the N-terminal section; belongs to the ferrochelatase family. In the C-terminal section; belongs to the Hlip family.

Its subcellular location is the cytoplasm. The catalysed reaction is heme b + 2 H(+) = protoporphyrin IX + Fe(2+). The protein operates within porphyrin-containing compound metabolism; protoheme biosynthesis; protoheme from protoporphyrin-IX: step 1/1. Its function is as follows. Catalyzes the ferrous insertion into protoporphyrin IX. In terms of biological role, the Hlip proteins might regulate tetrapyrrole biosynthesis, maybe at the level of aminolevulinic acid synthesis. Deletion of 4 to 5 members of the Hlip family (always including this member) suggests the proteins are involved in regulation of chlorophyll biosynthesis, in stabilization of chlorophyll-binding proteins and/or in reuse of chlorophylls, and may regulate tetrapyrrole biosynthesis. The Hlip proteins probably stabilize PSII assembly intermediates. The protein is Ferrochelatase of Synechocystis sp. (strain ATCC 27184 / PCC 6803 / Kazusa).